Reading from the N-terminus, the 1533-residue chain is Actin cytoskeleton-regulatory complex protein pan-1 (1533 aa).

The segment at 1–204 (MYSNSNAFLG…PPPPVKPQAT (204 aa)) is disordered. Low complexity-rich tracts occupy residues 19–46 (QQPQQQQQQYGAPSPFGQQGPMQPQPTG), 53–136 (GFAP…FQTG), 143–170 (IPQQFQQQQSFQQQQQQQQQPSIQQPQP), and 177–193 (QIQAPAQQPAPTAQGGI). An EH 1 domain is found at 244–333 (DQARFETLFK…DHIKNEVSSM (90 aa)). The region spanning 277-312 (LDGDSLSQIWTLADTTRSGQLHFPEFALAMYLCNLK) is the EF-hand 1 domain. The span at 345-359 (AGSSSAPASNAPSFA) shows a compositional bias: low complexity. 2 disordered regions span residues 345 to 378 (AGSSSAPASNAPSFATQQNTAAVPTIQQPQPQPS) and 393 to 423 (QQTGFMGQNQGLQPQQTGFPGMNPQPTGYAG). Composition is skewed to polar residues over residues 360–378 (TQQNTAAVPTIQQPQPQPS) and 393–410 (QQTGFMGQNQGLQPQQTG). Residues 513–602 (EKTRYDALFR…PELVPPSARN (90 aa)) form the EH 2 domain. One can recognise an EF-hand 2 domain in the interval 546-581 (LDKPDLERIWTLADNGNKGRLDLDEFAVAMHLIYRK). Residues 649 to 664 (NRKDATVFKNNDEEVG) show a composition bias toward basic and acidic residues. Disordered regions lie at residues 649–691 (NRKD…GDDL), 894–917 (IEDSLKEGAPDSTSEHEKRRWEDA), 935–1306 (SRAA…STNP), and 1334–1533 (DAIS…RVLD). Residues 690–890 (DLTIEQLRKK…RDVEDSVREF (201 aa)) adopt a coiled-coil conformation. 2 stretches are compositionally biased toward basic and acidic residues: residues 894 to 916 (IEDSLKEGAPDSTSEHEKRRWED) and 935 to 947 (SRAARIRSQDRQG). Residues 968–982 (TPSPSISRTSTPAST) are compositionally biased toward low complexity. The stretch at 1026–1209 (ETAAQRAERE…KQLEAIDDED (184 aa)) forms a coiled coil. Composition is skewed to basic and acidic residues over residues 1031 to 1063 (RAERERAERAEKRRQAEEEDARREAERQAKLAE), 1090 to 1164 (GKAD…EEEK), and 1173 to 1203 (EAKEKEAQLAARRAEIEAARKREEELRKQLE). Residues 1204–1218 (AIDDEDSSSSDEEGP) show a composition bias toward acidic residues. Over residues 1221–1237 (ITPQASTPTVGGSQVGT) the composition is skewed to polar residues. Over residues 1279–1293 (SQSSEASTSSVAAPV) the composition is skewed to low complexity. Over residues 1348 to 1367 (DDDDDDWGSEKGSDDEDSDD) the composition is skewed to acidic residues. Residues 1412 to 1495 (SSPPPPPAPV…PPPGGAPAPS (84 aa)) are compositionally biased toward pro residues. A WH2 domain is found at 1500-1517 (RPAGLLGEIQAGRALKKT).

Belongs to the PAN1 family. In terms of assembly, component of the PAN1 actin cytoskeleton-regulatory complex.

The protein localises to the cell membrane. The protein resides in the endosome membrane. It localises to the cytoplasm. Its subcellular location is the cytoskeleton. It is found in the actin patch. Its function is as follows. Component of the PAN1 actin cytoskeleton-regulatory complex required for the internalization of endosomes during actin-coupled endocytosis. The complex links the site of endocytosis to the cell membrane-associated actin cytoskeleton. Mediates uptake of external molecules and vacuolar degradation of plasma membrane proteins. Plays a role in the proper organization of the cell membrane-associated actin cytoskeleton and promotes its destabilization. The chain is Actin cytoskeleton-regulatory complex protein pan-1 (pan-1) from Neurospora crassa (strain ATCC 24698 / 74-OR23-1A / CBS 708.71 / DSM 1257 / FGSC 987).